Reading from the N-terminus, the 449-residue chain is Integrator complex subunit 15 (449 aa).

This sequence belongs to the Integrator subunit 15 family. In terms of assembly, component of the Integrator complex, composed of core subunits INTS1, INTS2, INTS3, INTS4, INTS5, INTS6, INTS7, INTS8, INTS9/RC74, INTS10, INTS11/CPSF3L, INTS12, INTS13, INTS14 and INTS15. The core complex associates with protein phosphatase 2A subunits PPP2CA and PPP2R1A, to form the Integrator-PP2A (INTAC) complex. INTS15 is part of the tail subcomplex, composed of INTS10, INTS13, INTS14 and INTS15.

The protein resides in the nucleus. Its subcellular location is the chromosome. Its function is as follows. Component of the integrator complex, a multiprotein complex that terminates RNA polymerase II (Pol II) transcription in the promoter-proximal region of genes. The integrator complex provides a quality checkpoint during transcription elongation by driving premature transcription termination of transcripts that are unfavorably configured for transcriptional elongation: the complex terminates transcription by (1) catalyzing dephosphorylation of the C-terminal domain (CTD) of Pol II subunit POLR2A/RPB1 and SUPT5H/SPT5, (2) degrading the exiting nascent RNA transcript via endonuclease activity and (3) promoting the release of Pol II from bound DNA. The integrator complex is also involved in terminating the synthesis of non-coding Pol II transcripts, such as enhancer RNAs (eRNAs), small nuclear RNAs (snRNAs), telomerase RNAs and long non-coding RNAs (lncRNAs). INTS15 is part of the integrator tail module that acts as a platform for the recruitment of transcription factors at promoters. Within the integrator complex, INTS15 is required to bridge different integrator modules. This chain is Integrator complex subunit 15, found in Homo sapiens (Human).